The following is a 393-amino-acid chain: Protein TsgA (393 aa).

12 helical membrane-spanning segments follow: residues 11-31 (WISF…GMVM), 51-71 (FLNA…EIVP), 78-98 (FGFL…SLAL), 101-121 (AAMF…TFLV), 134-154 (LLFT…IAAF), 162-182 (WYWV…LTFG), 206-226 (IGVL…LGFI), 245-265 (TLVS…SFIL), 273-293 (ILTV…TGTP), 297-317 (AWSI…IITL), 332-352 (FVLT…GPIV), and 361-381 (LLTA…LGFV).

The protein belongs to the major facilitator superfamily. TsgA family.

It localises to the cell inner membrane. This is Protein TsgA from Escherichia coli O6:K15:H31 (strain 536 / UPEC).